Reading from the N-terminus, the 589-residue chain is Protein POF1B (589 aa).

Residues 334-443 (TFSNIREELG…QNLRMQVSET (110 aa)) adopt a coiled-coil conformation.

Interacts with nonmuscle actin.

Its subcellular location is the cell junction. It localises to the tight junction. Plays a key role in the organization of epithelial monolayers by regulating the actin cytoskeleton. May be involved in ovary development. The polypeptide is Protein POF1B (POF1B) (Homo sapiens (Human)).